A 126-amino-acid polypeptide reads, in one-letter code: Small ribosomal subunit protein uS12 (126 aa).

Residues 1 to 28 (MPTIQQLIRSERSKVQKKTKSPALKQCP) form a disordered region. Position 89 is a 3-methylthioaspartic acid (aspartate 89). Residues 104-126 (ATGVKDRKQGRSKYGTKREKAKK) are disordered. A compositionally biased stretch (basic residues) spans 113–126 (GRSKYGTKREKAKK).

This sequence belongs to the universal ribosomal protein uS12 family. In terms of assembly, part of the 30S ribosomal subunit. Contacts proteins S8 and S17. May interact with IF1 in the 30S initiation complex.

With S4 and S5 plays an important role in translational accuracy. Functionally, interacts with and stabilizes bases of the 16S rRNA that are involved in tRNA selection in the A site and with the mRNA backbone. Located at the interface of the 30S and 50S subunits, it traverses the body of the 30S subunit contacting proteins on the other side and probably holding the rRNA structure together. The combined cluster of proteins S8, S12 and S17 appears to hold together the shoulder and platform of the 30S subunit. This chain is Small ribosomal subunit protein uS12, found in Synechocystis sp. (strain ATCC 27184 / PCC 6803 / Kazusa).